A 349-amino-acid polypeptide reads, in one-letter code: tRNA N6-adenosine threonylcarbamoyltransferase (349 aa).

Fe cation is bound by residues histidine 117 and histidine 121. Residues 139–143 (QVSGG), aspartate 172, glycine 185, aspartate 189, and asparagine 278 contribute to the substrate site. Aspartate 310 contacts Fe cation.

This sequence belongs to the KAE1 / TsaD family. Fe(2+) is required as a cofactor.

It localises to the cytoplasm. The enzyme catalyses L-threonylcarbamoyladenylate + adenosine(37) in tRNA = N(6)-L-threonylcarbamoyladenosine(37) in tRNA + AMP + H(+). In terms of biological role, required for the formation of a threonylcarbamoyl group on adenosine at position 37 (t(6)A37) in tRNAs that read codons beginning with adenine. Is involved in the transfer of the threonylcarbamoyl moiety of threonylcarbamoyl-AMP (TC-AMP) to the N6 group of A37, together with TsaE and TsaB. TsaD likely plays a direct catalytic role in this reaction. This chain is tRNA N6-adenosine threonylcarbamoyltransferase, found in Lactobacillus acidophilus (strain ATCC 700396 / NCK56 / N2 / NCFM).